The chain runs to 858 residues: MQEQYVPQSIEPAVQKHWDAKKTFKAVEKVDKEKFYCLSMFPYPSGRLHMGHVRNYTIGDVISRYQRLNGKNVLQPIGWDAFGLPAENAAVKNNTAPAPWTYENIEYMKNQLKMLGLGYDWDRELATCKPDYYRWEQWFFTKLYEKGLVYKKTSSVNWCPNDMTVLANEQVVDNCCWRCDTPVEQKEIPQWFIKITDYAEELLNDIDNLEGWPEMVKTMQRNWIGRSEGVNISFAIEGQAEQLEVYTTRPDTFMGVTYVGIAAGHPLALQAAATNPGLAAFIEECKNTKVAEAELATMEKKGMATGLYAIHPLDGRKVPVWVANFVLMNYGTGAVMAVPGHDQRDHEFATKYGLDIKAVIKPADGEVDVSDAAYTEKGVLFASGEFDGLDFQGAFDAIANKLEALGHGKRTVNFRLRDWGVSRQRYWGAPIPMLTLADGTVVPTPEDQLPVLLPEDVVMDGIQSPIKADAEWAKTTYNGQEAFRETDTFDTFMESSWYYARYCSPDYDKGMLDPAAANHWLPVDQYIGGIEHACMHLLYARFFHKLLRDAGLVNSDEPFKRLLCQGMVLADAFYYKDEKGGNVWVSPTDVKVERDEKGRITKAIDNDGREVIHSGMTKMSKSKNNGIDPQLMVERYGADTVRLFMMFASPAEMTLEWSDSGVEGAQRFLRRLWRLTFEHVSAGAVPALDVAALTSEQKAVRRELHKTIAKVSDDVGRRQTFNTAIAAIMELMNNLAKLGSDEQDRALMQEALETVVVMLSPITPHIGFELWKMLGKGDDVDHATWPVADEAAMVETEKLVVVQINGKMRGKLTVPAEISQADVEKLAMADASVQKFTDGLTVRKVIYVPGKLLNIVAN.

Positions 42–52 match the 'HIGH' region motif; that stretch reads PYPSGRLHMGH. A 'KMSKS' region motif is present at residues 618–622; the sequence is KMSKS. Residue Lys621 participates in ATP binding.

Belongs to the class-I aminoacyl-tRNA synthetase family.

The protein localises to the cytoplasm. The catalysed reaction is tRNA(Leu) + L-leucine + ATP = L-leucyl-tRNA(Leu) + AMP + diphosphate. This Aeromonas salmonicida (strain A449) protein is Leucine--tRNA ligase.